The following is an 820-amino-acid chain: Cation/H(+) antiporter 17 (820 aa).

Transmembrane regions (helical) follow at residues 30–50 (LPLLILQICIVLLLTRLLAFL), 58–75 (RVIAEIVGGILLGPSALG), 90–110 (LTVLDTLANLGLIFFLFLVGL), 124–144 (ALSIALAGITLPFVLGIGTSF), 159–179 (FLVFMGVALSITAFPVLARIL), 192–212 (IALSAAAVNDVAAWILLALAV), 222–242 (LTSLWVFLSGCGFVLFCIFVV), 276–296 (FVTDFIGIHALFGAFVIGVIF), 313–333 (LVSGLFLPLYFVSSGLKTNVA), 342–362 (GLLVLVIFNACFGKIIGTVLV), 374–394 (LALGFLMNTKGLVELIVLNIG), and 404–424 (IFAIMVLMAIFTTFMTTPLVL). Residues S817 and S819 each carry the phosphoserine modification.

The protein belongs to the monovalent cation:proton antiporter 2 (CPA2) transporter (TC 2.A.37) family. CHX (TC 2.A.37.4) subfamily. As to expression, predominantly expressed in epidermal and cortical cells of mature roots but also barely detected in leaves.

It is found in the membrane. Functionally, operates as a K(+)/H(+) antiporter that controls K(+) acquisition and homeostasis. In Arabidopsis thaliana (Mouse-ear cress), this protein is Cation/H(+) antiporter 17 (CHX17).